The primary structure comprises 70 residues: MKQGIHPEYTEITATCSCGNVIKTRSTVGKNLNLDVCGNCHPFYTGKQRVVDTGGRVERFNKRFSIPSTK.

The Zn(2+) site is built by Cys-16, Cys-18, Cys-37, and Cys-40.

The protein belongs to the bacterial ribosomal protein bL31 family. Type A subfamily. In terms of assembly, part of the 50S ribosomal subunit. The cofactor is Zn(2+).

In terms of biological role, binds the 23S rRNA. This chain is Large ribosomal subunit protein bL31, found in Actinobacillus pleuropneumoniae serotype 5b (strain L20).